The sequence spans 317 residues: Apolipoprotein E (317 aa).

The signal sequence occupies residues 1–18 (MKVLWAALLVTFLAGCQA). A run of 8 repeats spans residues 80-101 (TLMD…EQLS), 102-123 (PVAE…ARLG), 124-145 (ADME…AMLG), 146-167 (QSTE…KRLL), 168-189 (RDAD…EGAE), 190-211 (RGVS…VRAA), 212-233 (TVGS…ERLR), and 234-255 (ARME…EQVA). An 8 X 22 AA approximate tandem repeats region spans residues 80–255 (TLMDETMKEL…RLDEVKEQVA (176 aa)). Methionine 143 is modified (methionine sulfoxide). A Phosphoserine modification is found at serine 147. Residues 158 to 168 (HLRKLRKRLLR) are LDL and other lipoprotein receptors binding. 162–165 (LRKR) contacts heparin. The interval 210–290 (AATVGSLASQ…SWFEPLVEDM (81 aa)) is lipid-binding and lipoprotein association. Residue 229–236 (GERLRARM) participates in heparin binding. The segment at 266–317 (QQISLQAEAFQARLKSWFEPLVEDMQRQWAGLVEKVQAAVGASTAPVPIDNH) is homooligomerization. Positions 278–290 (RLKSWFEPLVEDM) are specificity for association with VLDL.

This sequence belongs to the apolipoprotein A1/A4/E family. In terms of assembly, homotetramer. May interact with ABCA1; functionally associated with ABCA1 in the biogenesis of HDLs. May interact with APP/A4 amyloid-beta peptide; the interaction is extremely stable in vitro but its physiological significance is unclear. May interact with MAPT. May interact with MAP2. In the cerebrospinal fluid, interacts with secreted SORL1. Interacts with PMEL; this allows the loading of PMEL luminal fragment on ILVs to induce fibril nucleation. In terms of processing, APOE exists as multiple glycosylated and sialylated glycoforms within cells and in plasma. The extent of glycosylation and sialylation are tissue and context specific. Glycated in plasma VLDL. Post-translationally, phosphorylated by FAM20C in the extracellular medium.

The protein localises to the secreted. It localises to the extracellular space. The protein resides in the extracellular matrix. It is found in the extracellular vesicle. Its subcellular location is the endosome. The protein localises to the multivesicular body. Functionally, APOE is an apolipoprotein, a protein associating with lipid particles, that mainly functions in lipoprotein-mediated lipid transport between organs via the plasma and interstitial fluids. APOE is a core component of plasma lipoproteins and is involved in their production, conversion and clearance. Apolipoproteins are amphipathic molecules that interact both with lipids of the lipoprotein particle core and the aqueous environment of the plasma. As such, APOE associates with chylomicrons, chylomicron remnants, very low density lipoproteins (VLDL) and intermediate density lipoproteins (IDL) but shows a preferential binding to high-density lipoproteins (HDL). It also binds a wide range of cellular receptors including the LDL receptor/LDLR, the LDL receptor-related proteins LRP1, LRP2 and LRP8 and the very low-density lipoprotein receptor/VLDLR that mediate the cellular uptake of the APOE-containing lipoprotein particles. Finally, APOE also has a heparin-binding activity and binds heparan-sulfate proteoglycans on the surface of cells, a property that supports the capture and the receptor-mediated uptake of APOE-containing lipoproteins by cells. A main function of APOE is to mediate lipoprotein clearance through the uptake of chylomicrons, VLDLs, and HDLs by hepatocytes. APOE is also involved in the biosynthesis by the liver of VLDLs as well as their uptake by peripheral tissues ensuring the delivery of triglycerides and energy storage in muscle, heart and adipose tissues. By participating in the lipoprotein-mediated distribution of lipids among tissues, APOE plays a critical role in plasma and tissues lipid homeostasis. APOE is also involved in two steps of reverse cholesterol transport, the HDLs-mediated transport of cholesterol from peripheral tissues to the liver, and thereby plays an important role in cholesterol homeostasis. First, it is functionally associated with ABCA1 in the biogenesis of HDLs in tissues. Second, it is enriched in circulating HDLs and mediates their uptake by hepatocytes. APOE also plays an important role in lipid transport in the central nervous system, regulating neuron survival and sprouting. In Macaca fascicularis (Crab-eating macaque), this protein is Apolipoprotein E (APOE).